A 238-amino-acid polypeptide reads, in one-letter code: Tetraspanin-4 (238 aa).

Residues M1–M13 lie on the Cytoplasmic side of the membrane. A helical transmembrane segment spans residues F14–L34. The Extracellular portion of the chain corresponds to A35 to N55. A helical membrane pass occupies residues L56–L76. The Cytoplasmic portion of the chain corresponds to K77–T85. Residues F86–A106 traverse the membrane as a helical segment. Over Y107–N201 the chain is Extracellular. Residues N152 and N161 are each glycosylated (N-linked (GlcNAc...) asparagine). Residues L202 to F222 form a helical membrane-spanning segment. At A223 to A238 the chain is on the cytoplasmic side.

It belongs to the tetraspanin (TM4SF) family. Forms a complex with integrins.

The protein resides in the membrane. The chain is Tetraspanin-4 (Tspan4) from Mus musculus (Mouse).